The primary structure comprises 199 residues: CASP-like protein 4C1 (199 aa).

Residues 1–35 (MESGSVANDSGPLNSTPDVHLYGKTAAMKQRRSNT) are Cytoplasmic-facing. A helical membrane pass occupies residues 36–56 (MLFVFRLLTFSFSLAAVLVMG). The Extracellular portion of the chain corresponds to 57-80 (TNKQKIRSAPQYLEVAWHDFDPFR). Residues 81–101 (YVFAVNAIICVYSFVETWLAV) form a helical membrane-spanning segment. Over 102–124 (YTLSRGTLLLPETFQVWFDYGHD) the chain is Cytoplasmic. Residues 125–145 (QGFACLLFSANSVGIAMAQLL) form a helical membrane-spanning segment. Residues 146–169 (QSGSTLIQGQYYCSDAGAYCTQAR) lie on the Extracellular side of the membrane. Residues 170–190 (VSIAMGFGAFLFLALSSFLTG) form a helical membrane-spanning segment. Topologically, residues 191 to 199 (LRVARWYLP) are cytoplasmic.

Belongs to the Casparian strip membrane proteins (CASP) family. As to quaternary structure, homodimer and heterodimers.

It localises to the cell membrane. The chain is CASP-like protein 4C1 from Physcomitrium patens (Spreading-leaved earth moss).